The sequence spans 212 residues: Thymidylate kinase (212 aa).

11–18 provides a ligand contact to ATP; sequence GPEGAGKT.

Belongs to the thymidylate kinase family.

It catalyses the reaction dTMP + ATP = dTDP + ADP. Phosphorylation of dTMP to form dTDP in both de novo and salvage pathways of dTTP synthesis. The chain is Thymidylate kinase from Streptococcus pneumoniae serotype 19F (strain G54).